The primary structure comprises 268 residues: Putative hydro-lyase A1S_1268 (268 aa).

Belongs to the D-glutamate cyclase family.

This is Putative hydro-lyase A1S_1268 from Acinetobacter baumannii (strain ATCC 17978 / DSM 105126 / CIP 53.77 / LMG 1025 / NCDC KC755 / 5377).